A 371-amino-acid chain; its full sequence is Bifunctional enzyme IspD/IspF (371 aa).

Residues 1-210 (MSEMSLIMLA…LNLPTPSFEI (210 aa)) form a 2-C-methyl-D-erythritol 4-phosphate cytidylyltransferase region. The 2-C-methyl-D-erythritol 2,4-cyclodiphosphate synthase stretch occupies residues 211 to 371 (FTGNGFDVHE…NLKYFDWTRL (161 aa)). A divalent metal cation is bound by residues Asp217 and His219. Residues 217 to 219 (DVH) and 243 to 244 (HS) each bind 4-CDP-2-C-methyl-D-erythritol 2-phosphate. Position 251 (His251) interacts with a divalent metal cation. Residues 265 to 267 (DIG), 270 to 274 (YPDTD), 341 to 344 (TTTE), Phe348, and Arg351 contribute to the 4-CDP-2-C-methyl-D-erythritol 2-phosphate site.

This sequence in the N-terminal section; belongs to the IspD/TarI cytidylyltransferase family. IspD subfamily. It in the C-terminal section; belongs to the IspF family. Requires a divalent metal cation as cofactor.

The catalysed reaction is 2-C-methyl-D-erythritol 4-phosphate + CTP + H(+) = 4-CDP-2-C-methyl-D-erythritol + diphosphate. It carries out the reaction 4-CDP-2-C-methyl-D-erythritol 2-phosphate = 2-C-methyl-D-erythritol 2,4-cyclic diphosphate + CMP. It participates in isoprenoid biosynthesis; isopentenyl diphosphate biosynthesis via DXP pathway; isopentenyl diphosphate from 1-deoxy-D-xylulose 5-phosphate: step 2/6. The protein operates within isoprenoid biosynthesis; isopentenyl diphosphate biosynthesis via DXP pathway; isopentenyl diphosphate from 1-deoxy-D-xylulose 5-phosphate: step 4/6. In terms of biological role, bifunctional enzyme that catalyzes the formation of 4-diphosphocytidyl-2-C-methyl-D-erythritol from CTP and 2-C-methyl-D-erythritol 4-phosphate (MEP) (IspD), and catalyzes the conversion of 4-diphosphocytidyl-2-C-methyl-D-erythritol 2-phosphate (CDP-ME2P) to 2-C-methyl-D-erythritol 2,4-cyclodiphosphate (ME-CPP) with a corresponding release of cytidine 5-monophosphate (CMP) (IspF). The sequence is that of Bifunctional enzyme IspD/IspF from Campylobacter jejuni (strain RM1221).